Here is a 100-residue protein sequence, read N- to C-terminus: Small ribosomal subunit protein uS14 (100 aa).

It belongs to the universal ribosomal protein uS14 family. As to quaternary structure, part of the 30S ribosomal subunit. Contacts proteins S3 and S10.

Its function is as follows. Binds 16S rRNA, required for the assembly of 30S particles and may also be responsible for determining the conformation of the 16S rRNA at the A site. This Parasynechococcus marenigrum (strain WH8102) protein is Small ribosomal subunit protein uS14.